The sequence spans 213 residues: Nucleolar protein 12 (213 aa).

Residues 33 to 96 are a coiled coil; it reads GFHKRKVERK…RLVTAKTESV (64 aa). A disordered region spans residues 109 to 213; it reads TISDLDLSGA…LTGKAQHSRE (105 aa). Over residues 130 to 139 the composition is skewed to acidic residues; it reads AGDESEEEAS. Basic residues predominate over residues 170 to 182; that stretch reads AHSRKKVKRKHPR.

The protein belongs to the RRP17 family. In terms of assembly, interacts with KIAA1191.

It localises to the nucleus. It is found in the nucleolus. Its subcellular location is the cytoplasm. Multifunctional RNA binding protein that plays a role in RNA metabolism and DNA maintenance. Participates in the resolution of DNA stress and the maintenance of genome integrity by localizing to sites of DNA insults. Also plays a role in proper nucleolar organization by limiting nucleolar size and regulating nucleolar number. Mechanistically, regulates the nucleolar levels of fibrillarin and nucleolin, two key players in pre-rRNA processing and ribosome assembly. The polypeptide is Nucleolar protein 12 (NOL12) (Pongo abelii (Sumatran orangutan)).